Reading from the N-terminus, the 233-residue chain is Orotidine 5'-phosphate decarboxylase (233 aa).

Residues D11, K34, 61 to 70 (DLKLHDIPNT), T117, R179, Q188, G208, and R209 contribute to the substrate site. The active-site Proton donor is K63.

This sequence belongs to the OMP decarboxylase family. Type 1 subfamily. In terms of assembly, homodimer.

The catalysed reaction is orotidine 5'-phosphate + H(+) = UMP + CO2. Its pathway is pyrimidine metabolism; UMP biosynthesis via de novo pathway; UMP from orotate: step 2/2. Its function is as follows. Catalyzes the decarboxylation of orotidine 5'-monophosphate (OMP) to uridine 5'-monophosphate (UMP). This is Orotidine 5'-phosphate decarboxylase from Streptococcus pneumoniae (strain Hungary19A-6).